We begin with the raw amino-acid sequence, 386 residues long: N-acetylneuraminate epimerase (386 aa).

The signal sequence occupies residues 1-29 (MGMQMKNSKKMMTLMALCLSVAITTSGYA). Kelch repeat units lie at residues 51–95 (VIYV…VFLN), 97–149 (ELYV…VKLN), 151–186 (TMALITGGVNEHIFDKYFIDIAAAAGDDSEKNRVIY), 187–232 (NYFN…AMEN), 235–284 (LTLI…LAGA), 306–355 (QNYT…NYGD), and 357–386 (IFLIGGENAKGKPVSSVISFAMHDGKLLIE). E241 (proton acceptor) is an active-site residue.

The protein belongs to the NanM family. In terms of assembly, homodimer.

The protein resides in the periplasm. The catalysed reaction is N-acetyl-alpha-neuraminate = N-acetyl-beta-neuraminate. In terms of biological role, converts alpha-N-acetylneuranimic acid (Neu5Ac) to the beta-anomer, accelerating the equilibrium between the alpha- and beta-anomers. Probably facilitates sialidase-negative bacteria to compete successfully for limited amounts of extracellular Neu5Ac, which is likely taken up in the beta-anomer. In addition, the rapid removal of sialic acid from solution might be advantageous to the bacterium to damp down host responses. This chain is N-acetylneuraminate epimerase, found in Salmonella arizonae (strain ATCC BAA-731 / CDC346-86 / RSK2980).